Here is a 467-residue protein sequence, read N- to C-terminus: ATP synthase subunit beta (467 aa).

154–161 (GGAGVGKT) is a binding site for ATP.

This sequence belongs to the ATPase alpha/beta chains family. F-type ATPases have 2 components, CF(1) - the catalytic core - and CF(0) - the membrane proton channel. CF(1) has five subunits: alpha(3), beta(3), gamma(1), delta(1), epsilon(1). CF(0) has three main subunits: a(1), b(2) and c(9-12). The alpha and beta chains form an alternating ring which encloses part of the gamma chain. CF(1) is attached to CF(0) by a central stalk formed by the gamma and epsilon chains, while a peripheral stalk is formed by the delta and b chains.

The protein resides in the cell inner membrane. The catalysed reaction is ATP + H2O + 4 H(+)(in) = ADP + phosphate + 5 H(+)(out). Its function is as follows. Produces ATP from ADP in the presence of a proton gradient across the membrane. The catalytic sites are hosted primarily by the beta subunits. The chain is ATP synthase subunit beta from Petrotoga mobilis (strain DSM 10674 / SJ95).